Here is a 151-residue protein sequence, read N- to C-terminus: Probable ubiquitin-conjugating enzyme E2 W-A (151 aa).

One can recognise a UBC core domain in the interval 3–151; the sequence is SMQKRLQKEL…TKWWYHDDTC (149 aa). The active-site Glycyl thioester intermediate is the Cys91.

The protein belongs to the ubiquitin-conjugating enzyme family.

It is found in the nucleus. It carries out the reaction S-ubiquitinyl-[E1 ubiquitin-activating enzyme]-L-cysteine + [E2 ubiquitin-conjugating enzyme]-L-cysteine = [E1 ubiquitin-activating enzyme]-L-cysteine + S-ubiquitinyl-[E2 ubiquitin-conjugating enzyme]-L-cysteine.. The enzyme catalyses S-ubiquitinyl-[E1 ubiquitin-activating enzyme]-L-cysteine + [acceptor protein]-N-terminal-amino acid = [E1 ubiquitin-activating enzyme]-L-cysteine + N-terminal-ubiquitinyl-[acceptor protein].. Its pathway is protein modification; protein ubiquitination. Its function is as follows. Accepts ubiquitin from the E1 complex and catalyzes its covalent attachment to other proteins. Catalyzes monoubiquitination. Involved in degradation of misfolded chaperone substrate and DNA repair. This is Probable ubiquitin-conjugating enzyme E2 W-A (ube2wa) from Danio rerio (Zebrafish).